We begin with the raw amino-acid sequence, 282 residues long: MKIILAKQAGFCFGVKRATQIAFEAAGKGGKTFTLGPIIHSPQVVQKLEEMGVKALENVAGMDEGTIIIRSHGAASDELEEAVRKQLDILDATCPFVKKAQEHVKNLSNSGYDVVVVGDADHPEVQGIVSYATGKVYVVASGEEAVKLPKMGKIGVVAQTTQSFENLRHVVDACLVKGGEIRVFHTICDATAVRQEEAKKLASQVDCMVVIGGYNSANTKRLAEVSAEIQPRTHHIEMAQQLDPAWFEGVKIVGITAGASTPKWIIDEVLEQIESIAKDKNR.

Cys-12 lines the [4Fe-4S] cluster pocket. His-40 and His-72 together coordinate (2E)-4-hydroxy-3-methylbut-2-enyl diphosphate. Residues His-40 and His-72 each coordinate dimethylallyl diphosphate. His-40 and His-72 together coordinate isopentenyl diphosphate. Cys-94 contacts [4Fe-4S] cluster. His-122 serves as a coordination point for (2E)-4-hydroxy-3-methylbut-2-enyl diphosphate. His-122 contacts dimethylallyl diphosphate. His-122 is an isopentenyl diphosphate binding site. Residue Glu-124 is the Proton donor of the active site. (2E)-4-hydroxy-3-methylbut-2-enyl diphosphate is bound at residue Thr-160. A [4Fe-4S] cluster-binding site is contributed by Cys-188. Positions 216, 218, and 260 each coordinate (2E)-4-hydroxy-3-methylbut-2-enyl diphosphate. Dimethylallyl diphosphate is bound by residues Ser-216, Asn-218, and Ser-260. The isopentenyl diphosphate site is built by Ser-216, Asn-218, and Ser-260.

It belongs to the IspH family. It depends on [4Fe-4S] cluster as a cofactor.

It carries out the reaction isopentenyl diphosphate + 2 oxidized [2Fe-2S]-[ferredoxin] + H2O = (2E)-4-hydroxy-3-methylbut-2-enyl diphosphate + 2 reduced [2Fe-2S]-[ferredoxin] + 2 H(+). The enzyme catalyses dimethylallyl diphosphate + 2 oxidized [2Fe-2S]-[ferredoxin] + H2O = (2E)-4-hydroxy-3-methylbut-2-enyl diphosphate + 2 reduced [2Fe-2S]-[ferredoxin] + 2 H(+). It functions in the pathway isoprenoid biosynthesis; dimethylallyl diphosphate biosynthesis; dimethylallyl diphosphate from (2E)-4-hydroxy-3-methylbutenyl diphosphate: step 1/1. It participates in isoprenoid biosynthesis; isopentenyl diphosphate biosynthesis via DXP pathway; isopentenyl diphosphate from 1-deoxy-D-xylulose 5-phosphate: step 6/6. In terms of biological role, catalyzes the conversion of 1-hydroxy-2-methyl-2-(E)-butenyl 4-diphosphate (HMBPP) into a mixture of isopentenyl diphosphate (IPP) and dimethylallyl diphosphate (DMAPP). Acts in the terminal step of the DOXP/MEP pathway for isoprenoid precursor biosynthesis. In Geotalea daltonii (strain DSM 22248 / JCM 15807 / FRC-32) (Geobacter daltonii), this protein is 4-hydroxy-3-methylbut-2-enyl diphosphate reductase.